The sequence spans 272 residues: Insulin-like growth factor-binding protein 5 (272 aa).

The first 20 residues, 1 to 20 (MVLLTAVLLLLAAYAGPAQS), serve as a signal peptide directing secretion. The IGFBP N-terminal domain occupies 23–103 (SFVHCEPCDE…LHGRGVCLNE (81 aa)). Disulfide bonds link C27/C53, C30/C55, C38/C56, C45/C59, C67/C80, and C74/C100. Positions 111–122 (KIERDSREHEEP) are enriched in basic and acidic residues. Residues 111-130 (KIERDSREHEEPTTSEMAEE) form a disordered region. Residue S116 is modified to Phosphoserine; by FAM20C. T172 is a glycosylation site (O-linked (HexNAc...) threonine). The region spanning 189 to 263 (QGPCRRHMEA…MEYVDGDFQC (75 aa)) is the Thyroglobulin type-1 domain. Disulfide bonds link C192-C219, C230-C241, and C243-C263.

As to quaternary structure, interacts with IGF1; this interaction enhances the growth stimulatory effects of IGF1 on fibroblasts. Interacts with CAV1; this interaction allows trafficking of IGFBP5 from the plasma membrane to the nucleus. Interacts with NCL; this interaction is necessary for IGFBP5 localization to the nucleus. Post-translationally, cleaved by C1S in extracellular space. In terms of tissue distribution, osteosarcoma, and at lower levels in liver, kidney and brain.

The protein localises to the secreted. It is found in the cytoplasm. It localises to the nucleus. Multifunctional protein that plays a critical role in regulating the availability of IGFs to their receptors and thereby regulates IGF-mediated cellular processes including proliferation, differentiation, and apoptosis in a cell-type specific manner. Increases the cell proliferation of osteoblasts, intestinal smooth muscle cells and neuroblastoma cells. Enhances adhesion and survival of epithelial cells but decreases adhesion of mesenchymal cells. Once secreted, acts as a major mediator of mTORC1-dependent feedback inhibition of IGF1 signaling. Also plays a role in the induction of extracellular matrix (ECM) production and deposition independently of its nuclear translocation and binding to IGFs. Acts itself as a growth factor that can act independently of IGFs to regulate bone formation. Acts as a ligand for the ROR1 receptor which triggers formation of ROR1/HER2 heterodimer to enhance CREB oncogenic signaling. This chain is Insulin-like growth factor-binding protein 5 (IGFBP5), found in Homo sapiens (Human).